A 192-amino-acid chain; its full sequence is Ion-translocating oxidoreductase complex subunit A (192 aa).

The next 6 membrane-spanning stretches (helical) occupy residues 5–25, 39–59, 72–92, 102–122, 134–154, and 171–191; these read ILLL…FLGL, IGMG…AYLV, LRTM…EMVV, LLGI…VALL, IIYG…FASM, and SIAM…TGLV.

It belongs to the NqrDE/RnfAE family. The complex is composed of six subunits: RnfA, RnfB, RnfC, RnfD, RnfE and RnfG.

It is found in the cell inner membrane. Part of a membrane-bound complex that couples electron transfer with translocation of ions across the membrane. This Vibrio vulnificus (strain CMCP6) protein is Ion-translocating oxidoreductase complex subunit A.